The chain runs to 361 residues: Alanine racemase (361 aa).

Lys-34 acts as the Proton acceptor; specific for D-alanine in catalysis. Lys-34 bears the N6-(pyridoxal phosphate)lysine mark. Arg-129 is a binding site for substrate. The active-site Proton acceptor; specific for L-alanine is the Tyr-256. Met-304 is a substrate binding site.

This sequence belongs to the alanine racemase family. Pyridoxal 5'-phosphate is required as a cofactor.

It carries out the reaction L-alanine = D-alanine. It participates in amino-acid biosynthesis; D-alanine biosynthesis; D-alanine from L-alanine: step 1/1. Its function is as follows. Catalyzes the interconversion of L-alanine and D-alanine. May also act on other amino acids. This Corynebacterium glutamicum (strain R) protein is Alanine racemase (alr).